Reading from the N-terminus, the 147-residue chain is SPI-1 type 3 secretion system pilotin (147 aa).

The N-terminal stretch at 1-15 (MKKFYSCLPVFLLIG) is a signal peptide. Residue Cys-16 is the site of N-palmitoyl cysteine attachment. The S-diacylglycerol cysteine moiety is linked to residue Cys-16.

Belongs to the InvH family.

It localises to the cell outer membrane. Its function is as follows. Involved in the synthesis of the type III secretion system (T3SS), also called injectisome, which is used to inject bacterial effector proteins into eukaryotic host cells. Pilot protein that is required for the proper localization of the secretin InvG/SctC in the outer membrane. Necessary for efficient adherence and entry of these organisms into cultured epithelial cells. In Salmonella typhimurium (strain SL1344), this protein is SPI-1 type 3 secretion system pilotin.